The following is a 240-amino-acid chain: Probable hydroxyacylglutathione hydrolase (240 aa).

The Zn(2+) site is built by H33, H35, D37, H38, H95, and D119. Substrate is bound by residues R128, 158 to 160, and 234 to 237; these read HEY and REEK. H158 provides a ligand contact to Zn(2+).

Belongs to the metallo-beta-lactamase superfamily. Glyoxalase II family. Requires Zn(2+) as cofactor.

The enzyme catalyses an S-(2-hydroxyacyl)glutathione + H2O = a 2-hydroxy carboxylate + glutathione + H(+). The protein operates within secondary metabolite metabolism; methylglyoxal degradation; (R)-lactate from methylglyoxal: step 2/2. Thiolesterase that catalyzes the hydrolysis of S-D-lactoyl-glutathione to form glutathione and D-lactic acid. This is Probable hydroxyacylglutathione hydrolase from Schistosoma mansoni (Blood fluke).